The primary structure comprises 190 residues: uncharacterized protein (190 aa).

The protein to E.coli YdjR.

This is an uncharacterized protein from Pseudomonas putida (Arthrobacter siderocapsulatus).